We begin with the raw amino-acid sequence, 281 residues long: Small ribosomal subunit biogenesis GTPase RsgA (281 aa).

A CP-type G domain is found at 59–212 (QNEFIRPKVA…LIDTPGFSSL (154 aa)). GTP-binding positions include 108–111 (TKAD) and 155–163 (GQSGVGKTT). Positions 235, 240, 242, and 250 each coordinate Zn(2+).

Belongs to the TRAFAC class YlqF/YawG GTPase family. RsgA subfamily. In terms of assembly, monomer. Associates with 30S ribosomal subunit, binds 16S rRNA. It depends on Zn(2+) as a cofactor.

The protein resides in the cytoplasm. Its function is as follows. One of several proteins that assist in the late maturation steps of the functional core of the 30S ribosomal subunit. Helps release RbfA from mature subunits. May play a role in the assembly of ribosomal proteins into the subunit. Circularly permuted GTPase that catalyzes slow GTP hydrolysis, GTPase activity is stimulated by the 30S ribosomal subunit. The polypeptide is Small ribosomal subunit biogenesis GTPase RsgA (Mycoplasmopsis agalactiae (strain NCTC 10123 / CIP 59.7 / PG2) (Mycoplasma agalactiae)).